The following is a 47-amino-acid chain: Photosystem II reaction center protein K (47 aa).

Residues 1-10 (MAVYTLDLLA) constitute a propeptide that is removed on maturation. Residues 19–39 (FGPLIDILPIIPLFFLLLAFV) form a helical membrane-spanning segment.

Belongs to the PsbK family. As to quaternary structure, PSII is composed of 1 copy each of membrane proteins PsbA, PsbB, PsbC, PsbD, PsbE, PsbF, PsbH, PsbI, PsbJ, PsbK, PsbL, PsbM, PsbT, PsbX, PsbY, PsbZ, Psb30/Ycf12, peripheral proteins PsbO, CyanoQ (PsbQ), PsbU, PsbV and a large number of cofactors. It forms dimeric complexes.

It localises to the cellular thylakoid membrane. Its function is as follows. One of the components of the core complex of photosystem II (PSII). PSII is a light-driven water:plastoquinone oxidoreductase that uses light energy to abstract electrons from H(2)O, generating O(2) and a proton gradient subsequently used for ATP formation. It consists of a core antenna complex that captures photons, and an electron transfer chain that converts photonic excitation into a charge separation. The chain is Photosystem II reaction center protein K from Synechococcus sp. (strain CC9311).